A 36-amino-acid chain; its full sequence is U14-ctenitoxin-Co1b (36 aa).

Expressed by the venom gland.

It localises to the secreted. Functionally, not toxic to mice by intracerebroventricular injection. The polypeptide is U14-ctenitoxin-Co1b (Ctenus ornatus (Brazilian spider)).